A 413-amino-acid polypeptide reads, in one-letter code: Glutamyl-tRNA reductase (413 aa).

Substrate is bound by residues 57 to 60 (TCNR), Ser-113, 118 to 120 (DFE), and Gln-124. The active-site Nucleophile is Cys-58. Position 193–198 (193–198 (GTGKIG)) interacts with NADP(+).

This sequence belongs to the glutamyl-tRNA reductase family. Homodimer.

It carries out the reaction (S)-4-amino-5-oxopentanoate + tRNA(Glu) + NADP(+) = L-glutamyl-tRNA(Glu) + NADPH + H(+). It participates in porphyrin-containing compound metabolism; protoporphyrin-IX biosynthesis; 5-aminolevulinate from L-glutamyl-tRNA(Glu): step 1/2. Functionally, catalyzes the NADPH-dependent reduction of glutamyl-tRNA(Glu) to glutamate 1-semialdehyde (GSA). The polypeptide is Glutamyl-tRNA reductase (Flavobacterium psychrophilum (strain ATCC 49511 / DSM 21280 / CIP 103535 / JIP02/86)).